The following is a 125-amino-acid chain: Large ribosomal subunit protein uL22 (125 aa).

This sequence belongs to the universal ribosomal protein uL22 family. As to quaternary structure, part of the 50S ribosomal subunit.

Its function is as follows. This protein binds specifically to 23S rRNA; its binding is stimulated by other ribosomal proteins, e.g. L4, L17, and L20. It is important during the early stages of 50S assembly. It makes multiple contacts with different domains of the 23S rRNA in the assembled 50S subunit and ribosome. The globular domain of the protein is located near the polypeptide exit tunnel on the outside of the subunit, while an extended beta-hairpin is found that lines the wall of the exit tunnel in the center of the 70S ribosome. The protein is Large ribosomal subunit protein uL22 of Novosphingobium aromaticivorans (strain ATCC 700278 / DSM 12444 / CCUG 56034 / CIP 105152 / NBRC 16084 / F199).